An 82-amino-acid chain; its full sequence is MNVEHEVKLLVEELKRLGQPNSDDKIVVKFGVLFNDDRCANIFEALVGTLKAAKRKKIVHYDSELLLQGVHDHVDIVLLKDE.

Belongs to the costars family.

The chain is Costars family protein v1g158749 from Nematostella vectensis (Starlet sea anemone).